The following is a 265-amino-acid chain: Urease accessory protein UreH (265 aa).

The protein belongs to the UreD family. As to quaternary structure, ureH, UreF and UreG form a complex that acts as a GTP-hydrolysis-dependent molecular chaperone, activating the urease apoprotein by helping to assemble the nickel containing metallocenter of UreC. The UreE protein probably delivers the nickel.

The protein resides in the cytoplasm. Its function is as follows. Required for maturation of urease via the functional incorporation of the urease nickel metallocenter. The sequence is that of Urease accessory protein UreH from Helicobacter pylori (strain HPAG1).